Consider the following 129-residue polypeptide: Small ribosomal subunit protein uS11 (129 aa).

This sequence belongs to the universal ribosomal protein uS11 family. Part of the 30S ribosomal subunit. Interacts with proteins S7 and S18. Binds to IF-3.

Functionally, located on the platform of the 30S subunit, it bridges several disparate RNA helices of the 16S rRNA. Forms part of the Shine-Dalgarno cleft in the 70S ribosome. In Sodalis glossinidius (strain morsitans), this protein is Small ribosomal subunit protein uS11.